The primary structure comprises 86 residues: Putative membrane protein insertion efficiency factor (86 aa).

The disordered stretch occupies residues G64–S86. Low complexity predominate over residues K70–T79.

Belongs to the UPF0161 family.

It localises to the cell inner membrane. In terms of biological role, could be involved in insertion of integral membrane proteins into the membrane. In Janthinobacterium sp. (strain Marseille) (Minibacterium massiliensis), this protein is Putative membrane protein insertion efficiency factor.